The primary structure comprises 74 residues: Ribosome modulation factor (74 aa).

This sequence belongs to the ribosome modulation factor family.

Its subcellular location is the cytoplasm. During stationary phase, converts 70S ribosomes to an inactive dimeric form (100S ribosomes). The polypeptide is Ribosome modulation factor (Cellvibrio japonicus (strain Ueda107) (Pseudomonas fluorescens subsp. cellulosa)).